The chain runs to 218 residues: Probable GTP-binding protein EngB (218 aa).

Positions 23 to 200 (EVPEIAFVGR…AQLLWQWAHP (178 aa)) constitute an EngB-type G domain. GTP contacts are provided by residues 31–38 (GRSNAGKS), 58–62 (GRTQH), 80–83 (DLPG), 150–153 (TKAD), and 179–181 (FSA). Mg(2+)-binding residues include Ser38 and Thr60.

This sequence belongs to the TRAFAC class TrmE-Era-EngA-EngB-Septin-like GTPase superfamily. EngB GTPase family. Mg(2+) is required as a cofactor.

In terms of biological role, necessary for normal cell division and for the maintenance of normal septation. In Acidovorax ebreus (strain TPSY) (Diaphorobacter sp. (strain TPSY)), this protein is Probable GTP-binding protein EngB.